The sequence spans 468 residues: Acetyl-CoA decarbonylase/synthase complex subunit gamma 2 (468 aa).

A 4Fe-4S domain is found at 1 to 60; sequence MKINSPLEAYKYLPQTNCGECGEATCMAFASKLIDRSGKPTQCPPLVKEKKFAKKLAELE. Positions 18, 21, 26, and 43 each coordinate [4Fe-4S] cluster.

As to quaternary structure, heterodimer of delta and gamma chains. The ACDS complex is made up of alpha, epsilon, beta, gamma and delta chains with a probable stoichiometry of (alpha(2)epsilon(2))(4)-beta(8)-(gamma(1)delta(1))(8). It depends on corrinoid as a cofactor. The cofactor is [4Fe-4S] cluster.

The catalysed reaction is 5,6,7,8-tetrahydrosarcinapterin + methyl-Co(III)-[corrinoid Fe-S protein] = 5-methyltetrahydrosarcinapterin + Co(I)-[corrinoid Fe-S protein] + H(+). It participates in one-carbon metabolism; methanogenesis from acetate. Functionally, part of a complex that catalyzes the reversible cleavage of acetyl-CoA, allowing growth on acetate as sole source of carbon and energy. The chain is Acetyl-CoA decarbonylase/synthase complex subunit gamma 2 from Methanosarcina thermophila.